We begin with the raw amino-acid sequence, 206 residues long: Small ribosomal subunit protein uS5 (206 aa).

The span at 1–15 (MTDTPTKQEIQSKND) shows a compositional bias: polar residues. Positions 1 to 50 (MTDTPTKQEIQSKNDNVPGATPVEQKKNNRNDRKRNRRGDSKNLERDSDW) are disordered. Residues 38 to 50 (RGDSKNLERDSDW) show a composition bias toward basic and acidic residues. One can recognise an S5 DRBM domain in the interval 50 to 113 (WQERVVQIRR…SDGKKNLVRV (64 aa)).

It belongs to the universal ribosomal protein uS5 family. In terms of assembly, part of the 30S ribosomal subunit. Contacts proteins S4 and S8.

In terms of biological role, with S4 and S12 plays an important role in translational accuracy. Located at the back of the 30S subunit body where it stabilizes the conformation of the head with respect to the body. This chain is Small ribosomal subunit protein uS5, found in Prochlorococcus marinus (strain MIT 9301).